A 386-amino-acid chain; its full sequence is Delta(7)-sterol 5(6)-desaturase ERG3 (386 aa).

Transmembrane regions (helical) follow at residues 120-140, 172-192, and 206-226; these read LSLF…VAYL, IPVM…GYSF, and AILW…YFLH. Residues 214-337 form the Fatty acid hydroxylase domain; that stretch reads FILFTDCGIY…FTTLWDRLGN (124 aa). The Histidine box-1 signature appears at 226–230; sequence HRWLH. The Histidine box-2 signature appears at 239–243; that stretch reads HKPHH. The chain crosses the membrane as a helical span at residues 272–292; it reads PLLFPLHKVLYLFLFTFVNFW. The Histidine box-3 motif lies at 314-318; it reads HTVHH.

The protein belongs to the sterol desaturase family. Fe cation is required as a cofactor.

It is found in the endoplasmic reticulum membrane. It catalyses the reaction a Delta(7)-sterol + 2 Fe(II)-[cytochrome b5] + O2 + 2 H(+) = a Delta(5),Delta(7)-sterol + 2 Fe(III)-[cytochrome b5] + 2 H2O. It participates in steroid metabolism; ergosterol biosynthesis; ergosterol from zymosterol: step 3/5. C-5 sterol desaturase; part of the third module of ergosterol biosynthesis pathway that includes the late steps of the pathwa. ERG3 catalyzes the introduction of a C-5 double bond in the B ring to produce 5-dehydroepisterol. The third module or late pathway involves the ergosterol synthesis itself through consecutive reactions that mainly occur in the endoplasmic reticulum (ER) membrane. Firstly, the squalene synthase ERG9 catalyzes the condensation of 2 farnesyl pyrophosphate moieties to form squalene, which is the precursor of all steroids. Squalene synthase is crucial for balancing the incorporation of farnesyl diphosphate (FPP) into sterol and nonsterol isoprene synthesis. Secondly, the squalene epoxidase ERG1 catalyzes the stereospecific oxidation of squalene to (S)-2,3-epoxysqualene, which is considered to be a rate-limiting enzyme in steroid biosynthesis. Then, the lanosterol synthase ERG7 catalyzes the cyclization of (S)-2,3 oxidosqualene to lanosterol, a reaction that forms the sterol core. In the next steps, lanosterol is transformed to zymosterol through a complex process involving various demethylation, reduction and desaturation reactions. The lanosterol 14-alpha-demethylase ERG11 (also known as CYP51) catalyzes C14-demethylation of lanosterol to produce 4,4'-dimethyl cholesta-8,14,24-triene-3-beta-ol, which is critical for ergosterol biosynthesis. The C-14 reductase ERG24 reduces the C14=C15 double bond of 4,4-dimethyl-cholesta-8,14,24-trienol to produce 4,4-dimethyl-cholesta-8,24-dienol. 4,4-dimethyl-cholesta-8,24-dienol is substrate of the C-4 demethylation complex ERG25-ERG26-ERG27 in which ERG25 catalyzes the three-step monooxygenation required for the demethylation of 4,4-dimethyl and 4alpha-methylsterols, ERG26 catalyzes the oxidative decarboxylation that results in a reduction of the 3-beta-hydroxy group at the C-3 carbon to an oxo group, and ERG27 is responsible for the reduction of the keto group on the C-3. ERG28 has a role as a scaffold to help anchor ERG25, ERG26 and ERG27 to the endoplasmic reticulum and ERG29 regulates the activity of the iron-containing C4-methylsterol oxidase ERG25. Then, the sterol 24-C-methyltransferase ERG6 catalyzes the methyl transfer from S-adenosyl-methionine to the C-24 of zymosterol to form fecosterol. The C-8 sterol isomerase ERG2 catalyzes the reaction which results in unsaturation at C-7 in the B ring of sterols and thus converts fecosterol to episterol. The sterol-C5-desaturase ERG3 then catalyzes the introduction of a C-5 double bond in the B ring to produce 5-dehydroepisterol. The C-22 sterol desaturase ERG5 further converts 5-dehydroepisterol into ergosta-5,7,22,24(28)-tetraen-3beta-ol by forming the C-22(23) double bond in the sterol side chain. Finally, ergosta-5,7,22,24(28)-tetraen-3beta-ol is substrate of the C-24(28) sterol reductase ERG4 to produce ergosterol. In Candida albicans (strain SC5314 / ATCC MYA-2876) (Yeast), this protein is Delta(7)-sterol 5(6)-desaturase ERG3.